Consider the following 190-residue polypeptide: Endoribonuclease YbeY (190 aa).

The Zn(2+) site is built by H147, H151, and H157.

It belongs to the endoribonuclease YbeY family. It depends on Zn(2+) as a cofactor.

The protein resides in the cytoplasm. Single strand-specific metallo-endoribonuclease involved in late-stage 70S ribosome quality control and in maturation of the 3' terminus of the 16S rRNA. In Nitrobacter winogradskyi (strain ATCC 25391 / DSM 10237 / CIP 104748 / NCIMB 11846 / Nb-255), this protein is Endoribonuclease YbeY.